The sequence spans 151 residues: Ribosome maturation factor RimP (151 aa).

Belongs to the RimP family.

It is found in the cytoplasm. Required for maturation of 30S ribosomal subunits. The sequence is that of Ribosome maturation factor RimP from Crocosphaera subtropica (strain ATCC 51142 / BH68) (Cyanothece sp. (strain ATCC 51142)).